A 134-amino-acid chain; its full sequence is MGRDTIADIITSIRNADMNRKGTIQIASTNITENIVKILLREGFIKNVRKHQENNKYFLVLTLRHRRNRKGPYRTILNLKRISRPGLRIYSNYQRIPRILGGMGIVILSTSRGIMTDREARLEGIGGEILCYIW.

It belongs to the universal ribosomal protein uS8 family. Part of the 30S ribosomal subunit.

It is found in the plastid. The protein localises to the chloroplast. In terms of biological role, one of the primary rRNA binding proteins, it binds directly to 16S rRNA central domain where it helps coordinate assembly of the platform of the 30S subunit. The sequence is that of Small ribosomal subunit protein uS8c (rps8) from Eucalyptus globulus subsp. globulus (Tasmanian blue gum).